A 389-amino-acid chain; its full sequence is Succinate--CoA ligase [ADP-forming] subunit beta (389 aa).

An ATP-grasp domain is found at 9–236 (RDMFEAHGVP…KDAADPLEAK (228 aa)). ATP is bound by residues lysine 45, 52-54 (GRG), alanine 94, and glutamate 99. Residues asparagine 191 and aspartate 205 each coordinate Mg(2+). Substrate is bound by residues asparagine 256 and 318-320 (GIT).

This sequence belongs to the succinate/malate CoA ligase beta subunit family. As to quaternary structure, heterotetramer of two alpha and two beta subunits. Mg(2+) is required as a cofactor.

It catalyses the reaction succinate + ATP + CoA = succinyl-CoA + ADP + phosphate. It carries out the reaction GTP + succinate + CoA = succinyl-CoA + GDP + phosphate. It functions in the pathway carbohydrate metabolism; tricarboxylic acid cycle; succinate from succinyl-CoA (ligase route): step 1/1. Its function is as follows. Succinyl-CoA synthetase functions in the citric acid cycle (TCA), coupling the hydrolysis of succinyl-CoA to the synthesis of either ATP or GTP and thus represents the only step of substrate-level phosphorylation in the TCA. The beta subunit provides nucleotide specificity of the enzyme and binds the substrate succinate, while the binding sites for coenzyme A and phosphate are found in the alpha subunit. The protein is Succinate--CoA ligase [ADP-forming] subunit beta of Arthrobacter sp. (strain FB24).